Consider the following 228-residue polypeptide: 7-cyano-7-deazaguanine synthase (228 aa).

8 to 18 (LSGGMDSATTL) contributes to the ATP binding site. 4 residues coordinate Zn(2+): Cys-188, Cys-198, Cys-201, and Cys-204.

This sequence belongs to the QueC family. The cofactor is Zn(2+).

The catalysed reaction is 7-carboxy-7-deazaguanine + NH4(+) + ATP = 7-cyano-7-deazaguanine + ADP + phosphate + H2O + H(+). The protein operates within purine metabolism; 7-cyano-7-deazaguanine biosynthesis. Catalyzes the ATP-dependent conversion of 7-carboxy-7-deazaguanine (CDG) to 7-cyano-7-deazaguanine (preQ(0)). This chain is 7-cyano-7-deazaguanine synthase, found in Nitrosomonas europaea (strain ATCC 19718 / CIP 103999 / KCTC 2705 / NBRC 14298).